Here is a 1236-residue protein sequence, read N- to C-terminus: DNA-directed RNA polymerase subunit beta (1236 aa).

The tract at residues 1193-1212 (PDVLDDDSYDQNNDEDIDEI) is disordered. A compositionally biased stretch (acidic residues) spans 1194 to 1212 (DVLDDDSYDQNNDEDIDEI).

This sequence belongs to the RNA polymerase beta chain family. In terms of assembly, the RNAP catalytic core consists of 2 alpha, 1 beta, 1 beta' and 1 omega subunit. When a sigma factor is associated with the core the holoenzyme is formed, which can initiate transcription.

It carries out the reaction RNA(n) + a ribonucleoside 5'-triphosphate = RNA(n+1) + diphosphate. Its function is as follows. DNA-dependent RNA polymerase catalyzes the transcription of DNA into RNA using the four ribonucleoside triphosphates as substrates. The protein is DNA-directed RNA polymerase subunit beta of Clostridium beijerinckii (strain ATCC 51743 / NCIMB 8052) (Clostridium acetobutylicum).